The primary structure comprises 446 residues: MITIKKGLNLPISGSPEQVIRDGNAITEVALLGEEYVGMRPSMKVREGDVVKKGQVLFEDKKNPGVVFTAPASGTVTAIHRGAKRVLQSVVIKIEGNEQITFEKYTTEQLNQLTSEQVRQNLQASGLWTALRTRPFSKVPAVDATPVSIFVNAMDTNPLCADPQVIVQQSAQAFEAGLTVLSRLHEGKVYLCKAANASIPSPSIANLDVKEFAGPHPAGLSGTHIHFIDPVSATKFVWYINYQDVIAVGKLFTTGELDVSRVVSLAGPQVKNPRLVRTVLGANLSQLTANEVKDGENRVISGSVLSGAKAAGPVDYLGRYALQVSVLEEGREKEFLGWIMPGANKYSLSRTVLGHFSKKLFNFTTALNGGERAMVPIGAYERVMPLDIIPTLLLRDLAAGDTDSAQALGCLELDEEDLALCTFVCPGKNEYGPLLRQALDKIEKEG.

The protein belongs to the NqrA family. In terms of assembly, composed of six subunits; NqrA, NqrB, NqrC, NqrD, NqrE and NqrF.

The enzyme catalyses a ubiquinone + n Na(+)(in) + NADH + H(+) = a ubiquinol + n Na(+)(out) + NAD(+). NQR complex catalyzes the reduction of ubiquinone-1 to ubiquinol by two successive reactions, coupled with the transport of Na(+) ions from the cytoplasm to the periplasm. NqrA to NqrE are probably involved in the second step, the conversion of ubisemiquinone to ubiquinol. The protein is Na(+)-translocating NADH-quinone reductase subunit A of Pasteurella multocida (strain Pm70).